Reading from the N-terminus, the 206-residue chain is VKLIYFNGRGRAEPIRMILVAAGVEFEDERIEFQDWPKIKPTIPGGRLPIVKITDKRGDVKTMSESLAIARFIARKHNMMGDTDDEYYIIEKMIGQVEDVESEYHKTLIKPPEEKEKISKEILNGKVPILLQAICETLKESTGNLTVGDKVTLADVVLIASIDHITDLDKEFLTGKYPEIHKHRKHLLATSPKLAKYLSERHATAF.

The region spanning 1–81 (VKLIYFNGRG…FIARKHNMMG (81 aa)) is the GST N-terminal domain. Glutathione is bound by residues tyrosine 5, 5–6 (YF), arginine 11, 36–40 (WPKIK), leucine 48, 50–51 (IV), and 65–66 (ES). In terms of domain architecture, GST C-terminal spans 83–206 (TDDEYYIIEK…YLSERHATAF (124 aa)).

This sequence belongs to the GST superfamily. Mu family. Homodimer.

It carries out the reaction RX + glutathione = an S-substituted glutathione + a halide anion + H(+). In terms of biological role, conjugation of reduced glutathione to a wide number of exogenous and endogenous hydrophobic electrophiles. Its function is as follows. GST isoenzymes appear to play a central role in the parasite detoxification system. Other functions are also suspected including a role in increasing the solubility of haematin in the parasite gut. In Schistosoma japonicum (Blood fluke), this protein is Glutathione S-transferase class-mu 28 kDa isozyme.